The chain runs to 380 residues: Guanine nucleotide-binding protein alpha-1 subunit (380 aa).

The disordered stretch occupies residues 1 to 25 (MGSSCSRSHSLSEAETTKNAKSADI). Residue Gly-2 is the site of N-myristoyl glycine attachment. The S-palmitoyl cysteine moiety is linked to residue Cys-5. The span at 10 to 25 (SLSEAETTKNAKSADI) shows a compositional bias: basic and acidic residues. The 343-residue stretch at 38-380 (HIHKLLLLGA…ESMRRSREGT (343 aa)) folds into the G-alpha domain. The interval 41–54 (KLLLLGAGESGKST) is G1 motif. GTP contacts are provided by Glu-49, Ser-50, Gly-51, Lys-52, Ser-53, Thr-54, Asp-163, Leu-188, Tyr-189, Thr-194, Gly-222, Asn-288, Lys-289, Asp-291, and Ala-356. Ser-53 is a binding site for Mg(2+). Residues 186-194 (DVLYARVRT) form a G2 motif region. A Mg(2+)-binding site is contributed by Thr-194. Positions 215–224 (YRLYDVGGQR) are G3 motif. Residues 284–291 (ILFLNKFD) form a G4 motif region. The interval 354–359 (TTALDQ) is G5 motif.

Belongs to the G-alpha family. G proteins are composed of 3 units; alpha, beta and gamma. The alpha chain contains the guanine nucleotide binding site. Interacts with COLD1. It depends on Mg(2+) as a cofactor.

It is found in the cell membrane. In terms of biological role, guanine nucleotide-binding proteins (G proteins) are involved as modulators or transducers in various transmembrane signaling systems. May function in a signal transduction pathway required for normal growth and development of internodes, leaves, panicles and seeds. Involved in gibberellin signal transduction. Involved in R gene-mediated disease resistance. Functions upstream of the small GTPase RAC1 in the early steps of signaling. Involved in brassinosteroid response. May not be a signaling molecule in BRI1-mediated perception or transduction. The sequence is that of Guanine nucleotide-binding protein alpha-1 subunit (GPA1) from Oryza sativa subsp. indica (Rice).